Here is a 461-residue protein sequence, read N- to C-terminus: Asparagine--tRNA ligase (461 aa).

This sequence belongs to the class-II aminoacyl-tRNA synthetase family. In terms of assembly, homodimer.

It is found in the cytoplasm. It carries out the reaction tRNA(Asn) + L-asparagine + ATP = L-asparaginyl-tRNA(Asn) + AMP + diphosphate + H(+). The chain is Asparagine--tRNA ligase from Oleidesulfovibrio alaskensis (strain ATCC BAA-1058 / DSM 17464 / G20) (Desulfovibrio alaskensis).